Here is a 628-residue protein sequence, read N- to C-terminus: FAD-linked oxidoreductase hmp9 (628 aa).

An N-terminal signal peptide occupies residues 1 to 29 (MFCIIRAQLLLLLHLLVLALLLVGTVCNA). The disordered stretch occupies residues 34–53 (GHPSELEPLALKRGGSPRDD). N-linked (GlcNAc...) asparagine glycosylation is found at asparagine 80 and asparagine 133. The region spanning 152–337 (LGQLPVYAID…LKTKIKAYPN (186 aa)) is the FAD-binding PCMH-type domain. Asparagine 356 is a glycosylation site (N-linked (GlcNAc...) asparagine).

It belongs to the oxygen-dependent FAD-linked oxidoreductase family.

It functions in the pathway secondary metabolite biosynthesis. In terms of biological role, FAD-linked oxidoreductase; part of the gene cluster that mediates the biosynthesis of hypothemycin, a resorcylic acid lactone (RAL) that irreversibly inhibits a subset of protein kinases with a conserved cysteine in the ATP binding site such as human ERK2. The first step is performed by both PKSs hmp3 and hmp8 and leads to the production of 7',8'-dehydrozearalenol (DHZ). The highly reducing PKS hpm8 synthesizes the reduced hexaketide (7S,11S,2E,8E)-7,11-dihydroxy-dodeca-2,8-dienoate, which is transferred downstream to the non-reducing PKS hpm3. Hpm3 then extends the reduced hexaketide to a nonaketide, after which regioselective cyclization and macrolactonization affords DHZ. The next step is the conversion of DHZ into aigialomycin C and is performed by the O-methyltransferase hmp5, the FAD-binding monooxygenase hmp7, and the cytochrome P450 monooxygenase hmp1. The wide substrate tolerance of the hmp5 and hmp7 implies that the reactions from DHZ to aigialomycin C can occur in any order. The steps from aigialomycin C to hypothemycin are less well established. The FAD-linked oxidoreductase hmp9 presumably catalyzes oxidation of the C-6' hydroxyl to a ketone. The timing of this oxidation is important, since the resulting enone functional group is a Michael acceptor that can react spontaneously with glutathione, an abundant metabolite in fungal cells. The glutathione S-transferase hmp2 catalyzes cis-trans isomerization of the 7',8' double bond with equilibrium favoring the trans isomer. The hpm6-encoded transporter might preferentially pump hypothemycin out of the cell relative to the trans isomer aigialomycin A. The cis-to-trans isomerization may be coupled with C-4' hydroxylation, since all known hypothemycin analogs containing the enone functional group also have hydroxyl groups at both C-4' and C-5'. This is FAD-linked oxidoreductase hmp9 from Hypomyces subiculosus (Nectria subiculosa).